The following is a 486-amino-acid chain: Sensor protein PhoQ (486 aa).

The Cytoplasmic segment spans residues 1–16; sequence MKKLLHLFFPLSLRVR. A helical membrane pass occupies residues 17-37; the sequence is FLLATAAVVLVLSLAYGMVAL. At 38-194 the chain is on the periplasmic side; that stretch reads IGYSVSFDKT…LKSSYMVWSW (157 aa). Asp-151 and Asp-152 together coordinate a divalent metal cation. A helical transmembrane segment spans residues 195 to 215; sequence FIYVLSANLLLVIPLLWVAAW. Residues 215-266 enclose the HAMP domain; it reads WWSLRPIEALAKEVRELEEHNRELLNPATTRELTSLVRNLNRLLKSERERYD. Over 216–486 the chain is Cytoplasmic; it reads WSLRPIEALA…GRQHSTPKDE (271 aa). Positions 274–480 constitute a Histidine kinase domain; sequence DLTHSLKTPL…RMEVIFGRQH (207 aa). His-277 is modified (phosphohistidine; by autocatalysis). Asn-385 provides a ligand contact to Mg(2+). Residues 385-393, 415-420, and 434-446 each bind ATP; these read NVLDNACKY, DDGPGI, and RVDTLRPGQGVGL. Gln-442 contributes to the Mg(2+) binding site.

In terms of assembly, homodimer.

It localises to the cell inner membrane. The catalysed reaction is ATP + protein L-histidine = ADP + protein N-phospho-L-histidine.. Member of the two-component regulatory system PhoP/PhoQ involved in virulence, adaptation to low Mg(2+) environments and the control of acid resistance genes. In low periplasmic Mg(2+), PhoQ functions as a membrane-associated protein kinase that undergoes autophosphorylation and subsequently transfers the phosphate to PhoP, resulting in the expression of PhoP-activated genes (PAG) and repression of PhoP-repressed genes (PRG). In high periplasmic Mg(2+), acts as a protein phosphatase that dephosphorylates phospho-PhoP, which results in the repression of PG and may lead to expression of some PRG. The chain is Sensor protein PhoQ (phoQ) from Escherichia coli O157:H7.